Here is a 422-residue protein sequence, read N- to C-terminus: Probable metallocarboxypeptidase A (422 aa).

The first 17 residues, Met1 to Ala17, serve as a signal peptide directing secretion. A propeptide spans Ala18–Pro112 (activation peptide). A Peptidase M14 domain is found at Ser119–Val419. 2 residues coordinate Zn(2+): His179 and Glu182. Residues His179–Glu182, Arg237, and Asn254–Arg255 contribute to the substrate site. Residues Cys248 and Cys271 are joined by a disulfide bond. Zn(2+) is bound at residue His309. Position 310–311 (Ser310–Tyr311) interacts with substrate. The active-site Proton donor/acceptor is Glu385.

This sequence belongs to the peptidase M14 family. It depends on Zn(2+) as a cofactor.

It localises to the secreted. In terms of biological role, extracellular metalloprotease that contributes to pathogenicity. The sequence is that of Probable metallocarboxypeptidase A (MCPA) from Trichophyton verrucosum (strain HKI 0517).